We begin with the raw amino-acid sequence, 381 residues long: Putative acyl-CoA dehydrogenase YdbM (381 aa).

FAD-binding positions include 158–160 (FTT) and 337–341 (RIVGA).

It belongs to the acyl-CoA dehydrogenase family. The cofactor is FAD.

This is Putative acyl-CoA dehydrogenase YdbM (ydbM) from Bacillus subtilis (strain 168).